The primary structure comprises 130 residues: MAENQYYGTGRRKSSAARVFIKPGSGNIVINQRSLEQYFGRETARMVVRQPLELVDMVGKFDLYITVKGGGISGQAGAIRHGITRALMEYDESLRGELRKAGFVTRDARQVERKKVGLRKARRRPQFSKR.

Belongs to the universal ribosomal protein uS9 family.

The polypeptide is Small ribosomal subunit protein uS9 (Pectobacterium atrosepticum (strain SCRI 1043 / ATCC BAA-672) (Erwinia carotovora subsp. atroseptica)).